Here is a 196-residue protein sequence, read N- to C-terminus: Small ribosomal subunit protein uS4c (196 aa).

In terms of domain architecture, S4 RNA-binding spans 89 to 169; the sequence is MRLDNIIFRL…LPKHLTIDTV (81 aa).

Belongs to the universal ribosomal protein uS4 family. In terms of assembly, part of the 30S ribosomal subunit. Contacts protein S5. The interaction surface between S4 and S5 is involved in control of translational fidelity.

The protein localises to the plastid. It localises to the chloroplast. Its function is as follows. One of the primary rRNA binding proteins, it binds directly to 16S rRNA where it nucleates assembly of the body of the 30S subunit. Functionally, with S5 and S12 plays an important role in translational accuracy. This Stipellula capensis (Cape rice grass) protein is Small ribosomal subunit protein uS4c (rps4).